Consider the following 131-residue polypeptide: RxLR effector protein 62 (131 aa).

The first 19 residues, 1–19, serve as a signal peptide directing secretion; that stretch reads MRLDILLFTLSSSTSLALS. The short motif at 49 to 60 is the RxLR-dEER element; that stretch reads RHLREEPANEAR. N-linked (GlcNAc...) asparagine glycosylation is present at Asn-61.

Belongs to the RxLR effector family.

It localises to the secreted. It is found in the host cell. In terms of biological role, secreted effector that suppresses callose deposition, a hallmark of pathogen-associated molecular pattern (PAMP)-triggered immunity (PTI) and renders host plants more susceptible to bacterial infection. Reduces host plant responsiveness to salicylic acid (SA) in haustoriated cells into which host-translocated effectors are delivered. The chain is RxLR effector protein 62 from Hyaloperonospora arabidopsidis (strain Emoy2) (Downy mildew agent).